The chain runs to 295 residues: MFKSGFVTIVGRPNVGKSTLLNYIMGEKLSIVSNKPQTTRNNIQTILTGEDYQIVFVDTPGIHKPKHKLGEYMVNSAKDSTNDVDLVLFLTNPDEEIGKGDKFILESLKDKKCPVYLVLNKIDESTPERVAKSLEMYSSEFNFKEIVPIAAIKGKNVDTLVDLMKTELPEGPKYYPEDMITDVPERFVVSEIVREKALRCLRDEVPHGIAVDIIQMKQSDNGTYHIEVDLICEKDSHKGIIIGKNGQMLKKIGETSRYELERFLRTKVNVKIWVKVRKEWRDNQNLLKELGYKKK.

One can recognise an Era-type G domain in the interval 3-170 (KSGFVTIVGR…VDLMKTELPE (168 aa)). The segment at 11-18 (GRPNVGKS) is G1. 11–18 (GRPNVGKS) provides a ligand contact to GTP. The tract at residues 37–41 (QTTRN) is G2. The segment at 58-61 (DTPG) is G3. Residues 58–62 (DTPGI) and 120–123 (NKID) contribute to the GTP site. A G4 region spans residues 120–123 (NKID). The segment at 149-151 (IAA) is G5. A KH type-2 domain is found at 201 to 278 (LRDEVPHGIA…NVKIWVKVRK (78 aa)).

Belongs to the TRAFAC class TrmE-Era-EngA-EngB-Septin-like GTPase superfamily. Era GTPase family. As to quaternary structure, monomer.

The protein localises to the cytoplasm. The protein resides in the cell membrane. Functionally, an essential GTPase that binds both GDP and GTP, with rapid nucleotide exchange. Plays a role in 16S rRNA processing and 30S ribosomal subunit biogenesis and possibly also in cell cycle regulation and energy metabolism. The polypeptide is GTPase Era (Clostridium botulinum (strain Eklund 17B / Type B)).